The sequence spans 129 residues: Small ribosomal subunit protein uS11 (129 aa).

It belongs to the universal ribosomal protein uS11 family. Part of the 30S ribosomal subunit. Interacts with proteins S7 and S18. Binds to IF-3.

Functionally, located on the platform of the 30S subunit, it bridges several disparate RNA helices of the 16S rRNA. Forms part of the Shine-Dalgarno cleft in the 70S ribosome. The sequence is that of Small ribosomal subunit protein uS11 from Maridesulfovibrio salexigens (strain ATCC 14822 / DSM 2638 / NCIMB 8403 / VKM B-1763) (Desulfovibrio salexigens).